The primary structure comprises 100 residues: Large ribosomal subunit protein uL23 (100 aa).

This sequence belongs to the universal ribosomal protein uL23 family. Part of the 50S ribosomal subunit. Contacts protein L29, and trigger factor when it is bound to the ribosome.

Functionally, one of the early assembly proteins it binds 23S rRNA. One of the proteins that surrounds the polypeptide exit tunnel on the outside of the ribosome. Forms the main docking site for trigger factor binding to the ribosome. This chain is Large ribosomal subunit protein uL23, found in Sodalis glossinidius (strain morsitans).